Here is a 604-residue protein sequence, read N- to C-terminus: DNA polymerase alpha subunit B (604 aa).

A disordered region spans residues 109–171 (ETLLNSYTTP…KYSSRSNRGE (63 aa)). Positions 113–141 (NSYTTPSKGSQKRTITTPETPLTKRSVSA) are enriched in polar residues. A phosphothreonine mark is found at Thr-129 and Thr-132. Phosphoserine occurs at positions 143, 149, 154, and 156. Residues 143 to 160 (SPHQLLSPSSFSPSATPP) show a composition bias toward low complexity.

This sequence belongs to the DNA polymerase alpha subunit B family. As to quaternary structure, component of the alpha DNA polymerase complex (also known as the alpha DNA polymerase-primase complex) consisting of four subunits: the catalytic subunit POLA1, the regulatory subunit POLA2, and the primase complex subunits PRIM1 and PRIM2 respectively. Within the complex, POLA1 directly interacts with PRIM2. In terms of processing, phosphorylated in a cell cycle-dependent manner, in G2/M phase.

The protein localises to the nucleus. Its function is as follows. Accessory subunit of the DNA polymerase alpha complex (also known as the alpha DNA polymerase-primase complex) which plays an essential role in the initiation of DNA synthesis. During the S phase of the cell cycle, the DNA polymerase alpha complex (composed of a catalytic subunit POLA1, an accessory subunit POLA2 and two primase subunits, the catalytic subunit PRIM1 and the regulatory subunit PRIM2) is recruited to DNA at the replicative forks via direct interactions with MCM10 and WDHD1. The primase subunit of the polymerase alpha complex initiates DNA synthesis by oligomerising short RNA primers on both leading and lagging strands. These primers are initially extended by the polymerase alpha catalytic subunit and subsequently transferred to polymerase delta and polymerase epsilon for processive synthesis on the lagging and leading strand, respectively. The protein is DNA polymerase alpha subunit B (POLA2) of Bos taurus (Bovine).